The primary structure comprises 194 residues: Fatty acid metabolism regulator protein (194 aa).

An HTH tetR-type domain is found at 5-65; the sequence is RPKYMQIIDA…SLFKEKMGQF (61 aa). Residues 28-47 constitute a DNA-binding region (H-T-H motif); it reads QVSKIAKQAGVADGTIYLYF.

As to quaternary structure, homodimer. Binds to DNA.

It localises to the cytoplasm. Functionally, transcriptional regulator in fatty acid degradation. Represses transcription of genes required for fatty acid transport and beta-oxidation, including acdA, fadA, fadB, fadE, fadF, fadG, fadH, fadM, fadN, lcfA and lcfB. Binding of FadR to DNA is specifically inhibited by long chain fatty acyl-CoA compounds of 14-20 carbon atoms in length. This chain is Fatty acid metabolism regulator protein (fadR), found in Bacillus subtilis (strain 168).